Reading from the N-terminus, the 257-residue chain is MSVATRVIACLDVDDGRVVKGVNFENLRDAGDPVELAAAYDAEGVDELTFLDVTASSSGRATMLDVVRRTAEQVFIPLTVGGGVRSVDDVNVLLRAGADKVGVNTAAIARPELLAELAQRFGSQCIVLSVDARRVRDGDVPTSSGWEVTTHGGRRGTGIDAIEWTSRGAELGVGEILLNSMDADGTKAGFDLEMIAAARAAVDVPVIASGGAGAIGHFAPAVQAGADAVLAASVFHFRELTIGEVKAAMAAEGITVR.

Catalysis depends on residues Asp12 and Asp131.

It belongs to the HisA/HisF family. In terms of assembly, heterodimer of HisH and HisF.

It localises to the cytoplasm. It carries out the reaction 5-[(5-phospho-1-deoxy-D-ribulos-1-ylimino)methylamino]-1-(5-phospho-beta-D-ribosyl)imidazole-4-carboxamide + L-glutamine = D-erythro-1-(imidazol-4-yl)glycerol 3-phosphate + 5-amino-1-(5-phospho-beta-D-ribosyl)imidazole-4-carboxamide + L-glutamate + H(+). It functions in the pathway amino-acid biosynthesis; L-histidine biosynthesis; L-histidine from 5-phospho-alpha-D-ribose 1-diphosphate: step 5/9. IGPS catalyzes the conversion of PRFAR and glutamine to IGP, AICAR and glutamate. The HisF subunit catalyzes the cyclization activity that produces IGP and AICAR from PRFAR using the ammonia provided by the HisH subunit. The protein is Imidazole glycerol phosphate synthase subunit HisF of Mycobacteroides abscessus (strain ATCC 19977 / DSM 44196 / CCUG 20993 / CIP 104536 / JCM 13569 / NCTC 13031 / TMC 1543 / L948) (Mycobacterium abscessus).